The sequence spans 229 residues: Triosephosphate isomerase (229 aa).

A substrate-binding site is contributed by 9-11 (NYK). The active-site Electrophile is His-93. The Proton acceptor role is filled by Glu-141. Substrate contacts are provided by residues Ile-146, Gly-180, and 201-202 (AS).

Belongs to the triosephosphate isomerase family. In terms of assembly, homotetramer; dimer of dimers.

The protein localises to the cytoplasm. It catalyses the reaction D-glyceraldehyde 3-phosphate = dihydroxyacetone phosphate. It functions in the pathway carbohydrate biosynthesis; gluconeogenesis. Its pathway is carbohydrate degradation; glycolysis; D-glyceraldehyde 3-phosphate from glycerone phosphate: step 1/1. In terms of biological role, involved in the gluconeogenesis. Catalyzes stereospecifically the conversion of dihydroxyacetone phosphate (DHAP) to D-glyceraldehyde-3-phosphate (G3P). In Sulfurisphaera tokodaii (strain DSM 16993 / JCM 10545 / NBRC 100140 / 7) (Sulfolobus tokodaii), this protein is Triosephosphate isomerase.